The chain runs to 267 residues: Interleukin-15 receptor subunit alpha (267 aa).

Residues 1 to 30 (MAPRRARGCRTLGLPALLLLLLLRPPATRG) form the signal peptide. The Sushi domain occupies 31-95 (ITCPPPMSVE…WTTPSLKCIR (65 aa)). The Extracellular segment spans residues 31-205 (ITCPPPMSVE…VYPQGHSDTT (175 aa)). 2 disulfides stabilise this stretch: Cys-33-Cys-75 and Cys-59-Cys-93. Residues 102–178 (QRPAPPSTVT…ESSHGTPSQT (77 aa)) are disordered. Polar residues predominate over residues 108 to 124 (STVTTAGVTPQPESLSP). The segment covering 129–145 (PAASSPSSNNTAATTAA) has biased composition (low complexity). N-linked (GlcNAc...) asparagine glycosylation occurs at Asn-137. Residues 152–165 (LMPSKSPSTGTTEI) are compositionally biased toward polar residues. The helical transmembrane segment at 206 to 228 (VAISTSTVLLCGLSAVSLLACYL) threads the bilayer. Topologically, residues 229-267 (KSRQTPPLASVEMEAMEALPVTWGTSSRDEDLENCSHHL) are cytoplasmic.

In terms of assembly, the interleukin-15 receptor IL15R is a heterotrimer of IL15RA, IL2RB and IL2RG. IL15RA also self-associates. Interacts with SYK. Post-translationally, N-glycosylated and O-glycosylated. A soluble form (sIL-15RA) arises from proteolytic shedding of the membrane-anchored receptor. It also binds IL-15 and thus interferes with IL-15 binding to the membrane receptor. Expressed in neutrophils (at protein level). Expressed in fetal brain with higher expression in the hippocampus and cerebellum than in cortex and thalamus. Higher levels of soluble sIL-15RA form in comparison with membrane-bound forms is present in all brain structures. Isoforms 1, 3, 4, 5, 6, 7, 8 and 9: Widely expressed.

The protein localises to the membrane. The protein resides in the nucleus membrane. Its subcellular location is the cell surface. It localises to the endoplasmic reticulum membrane. It is found in the golgi apparatus membrane. The protein localises to the cytoplasmic vesicle membrane. The protein resides in the secreted. Its subcellular location is the extracellular space. Its function is as follows. High-affinity receptor for interleukin-15. Can signal both in cis and trans where IL15R from one subset of cells presents IL15 to neighboring IL2RG-expressing cells. In neutrophils, binds and activates kinase SYK in response to IL15 stimulation. In neutrophils, required for IL15-induced phagocytosis in a SYK-dependent manner. Expression of different isoforms may alter or interfere with signal transduction. Does not bind IL15. In Homo sapiens (Human), this protein is Interleukin-15 receptor subunit alpha (IL15RA).